An 850-amino-acid chain; its full sequence is Serine/threonine-protein phosphatase 6 regulatory subunit 3-B (850 aa).

Disordered regions lie at residues 610 to 652, 683 to 778, and 793 to 850; these read NISY…VNHE, SDGS…MKET, and KSEE…NGPV. Acidic residues predominate over residues 627–638; it reads DSEESTDSEEEE. Polar residues-rich tracts occupy residues 703-731 and 764-778; these read ASFS…TSTE and DQMT…MKET. The segment covering 826 to 839 has biased composition (low complexity); it reads PSSSSQEQRISEQI.

It belongs to the SAPS family.

Functionally, regulatory subunit of protein phosphatase 6 (PP6). May function as a scaffolding PP6 subunit. This chain is Serine/threonine-protein phosphatase 6 regulatory subunit 3-B (ppp6r3-b), found in Xenopus laevis (African clawed frog).